The primary structure comprises 268 residues: Leucyl/phenylalanyl-tRNA--protein transferase (268 aa).

Belongs to the L/F-transferase family.

It is found in the cytoplasm. It carries out the reaction N-terminal L-lysyl-[protein] + L-leucyl-tRNA(Leu) = N-terminal L-leucyl-L-lysyl-[protein] + tRNA(Leu) + H(+). The enzyme catalyses N-terminal L-arginyl-[protein] + L-leucyl-tRNA(Leu) = N-terminal L-leucyl-L-arginyl-[protein] + tRNA(Leu) + H(+). It catalyses the reaction L-phenylalanyl-tRNA(Phe) + an N-terminal L-alpha-aminoacyl-[protein] = an N-terminal L-phenylalanyl-L-alpha-aminoacyl-[protein] + tRNA(Phe). Its function is as follows. Functions in the N-end rule pathway of protein degradation where it conjugates Leu, Phe and, less efficiently, Met from aminoacyl-tRNAs to the N-termini of proteins containing an N-terminal arginine or lysine. This is Leucyl/phenylalanyl-tRNA--protein transferase from Zymomonas mobilis subsp. mobilis (strain ATCC 31821 / ZM4 / CP4).